Consider the following 363-residue polypeptide: Flagellar P-ring protein 2 (363 aa).

The signal sequence occupies residues 1-20; the sequence is MKRIVLLLMSVALFSTAAQA.

Belongs to the FlgI family. As to quaternary structure, the basal body constitutes a major portion of the flagellar organelle and consists of four rings (L,P,S, and M) mounted on a central rod.

The protein resides in the periplasm. Its subcellular location is the bacterial flagellum basal body. Its function is as follows. Assembles around the rod to form the L-ring and probably protects the motor/basal body from shearing forces during rotation. In Vibrio parahaemolyticus serotype O3:K6 (strain RIMD 2210633), this protein is Flagellar P-ring protein 2 (flgI2).